A 226-amino-acid chain; its full sequence is UPF0758 protein Spy49_0870 (226 aa).

An MPN domain is found at 103–225 (SVLTSVQVAE…YYSFREKSTL (123 aa)). 3 residues coordinate Zn(2+): His-174, His-176, and Asp-187. A JAMM motif motif is present at residues 174–187 (HNHPSGNIEPSSND).

It belongs to the UPF0758 family.

The protein is UPF0758 protein Spy49_0870 of Streptococcus pyogenes serotype M49 (strain NZ131).